The chain runs to 235 residues: Orotidine 5'-phosphate decarboxylase (235 aa).

Substrate contacts are provided by residues Asp-17, Lys-39, 66 to 75 (DLKLHDIGNT), Thr-121, Arg-182, Gln-191, Gly-211, and Arg-212. The Proton donor role is filled by Lys-68.

This sequence belongs to the OMP decarboxylase family. Type 1 subfamily. As to quaternary structure, homodimer.

The enzyme catalyses orotidine 5'-phosphate + H(+) = UMP + CO2. It functions in the pathway pyrimidine metabolism; UMP biosynthesis via de novo pathway; UMP from orotate: step 2/2. Its function is as follows. Catalyzes the decarboxylation of orotidine 5'-monophosphate (OMP) to uridine 5'-monophosphate (UMP). The chain is Orotidine 5'-phosphate decarboxylase from Afipia carboxidovorans (strain ATCC 49405 / DSM 1227 / KCTC 32145 / OM5) (Oligotropha carboxidovorans).